The chain runs to 440 residues: uncharacterized protein (440 aa).

This is an uncharacterized protein from Rickettsia conorii (strain ATCC VR-613 / Malish 7).